We begin with the raw amino-acid sequence, 200 residues long: Imidazoleglycerol-phosphate dehydratase (200 aa).

This sequence belongs to the imidazoleglycerol-phosphate dehydratase family.

It localises to the cytoplasm. The catalysed reaction is D-erythro-1-(imidazol-4-yl)glycerol 3-phosphate = 3-(imidazol-4-yl)-2-oxopropyl phosphate + H2O. Its pathway is amino-acid biosynthesis; L-histidine biosynthesis; L-histidine from 5-phospho-alpha-D-ribose 1-diphosphate: step 6/9. The chain is Imidazoleglycerol-phosphate dehydratase from Chlorobium phaeovibrioides (strain DSM 265 / 1930) (Prosthecochloris vibrioformis (strain DSM 265)).